A 111-amino-acid chain; its full sequence is Macrodomain Ori protein (111 aa).

It belongs to the MaoP family.

Involved in the organization of the Ori region of the chromosome into a macrodomain (MD). It constrains DNA mobility in the Ori macrodomain and limits long-distance DNA interactions with other chromosomal regions. The sequence is that of Macrodomain Ori protein from Haemophilus influenzae (strain ATCC 51907 / DSM 11121 / KW20 / Rd).